We begin with the raw amino-acid sequence, 429 residues long: Adenylosuccinate synthetase (429 aa).

GTP contacts are provided by residues Gly-12 to Lys-18 and Gly-40 to Thr-42. Asp-13 serves as the catalytic Proton acceptor. Mg(2+) is bound by residues Asp-13 and Gly-40. Residues Asp-13–Lys-16, Asn-38–His-41, Thr-129, Arg-143, Gln-223, Thr-238, and Arg-302 each bind IMP. The active-site Proton donor is the His-41. Val-298–Arg-304 is a substrate binding site. Residues Arg-304, Lys-330–Asp-332, and Ser-412–Ser-414 each bind GTP.

This sequence belongs to the adenylosuccinate synthetase family. As to quaternary structure, homodimer. Requires Mg(2+) as cofactor.

The protein localises to the cytoplasm. The enzyme catalyses IMP + L-aspartate + GTP = N(6)-(1,2-dicarboxyethyl)-AMP + GDP + phosphate + 2 H(+). The protein operates within purine metabolism; AMP biosynthesis via de novo pathway; AMP from IMP: step 1/2. In terms of biological role, plays an important role in the de novo pathway of purine nucleotide biosynthesis. Catalyzes the first committed step in the biosynthesis of AMP from IMP. This Maricaulis maris (strain MCS10) (Caulobacter maris) protein is Adenylosuccinate synthetase.